The sequence spans 95 residues: Small ribosomal subunit protein bS6 (95 aa).

The protein belongs to the bacterial ribosomal protein bS6 family.

Binds together with bS18 to 16S ribosomal RNA. The sequence is that of Small ribosomal subunit protein bS6 from Bacillus pumilus (strain SAFR-032).